Here is a 489-residue protein sequence, read N- to C-terminus: WRKY transcription factor 72B (489 aa).

Disordered regions lie at residues 1–100, 131–159, and 234–267; these read MENK…EMRE, QKETDQKSSSTTVNTSTTHHDHESDQEAD, and DENEETSNKNLKTMRNNGDGDDVSQQNPTKRARV. Basic and acidic residues-rich tracts occupy residues 32-52 and 83-100; these read GRKEREDDKSKPSSPHHKDYM and THKEQDDQLASAKDEMRE. A coiled-coil region spans residues 84 to 132; the sequence is HKEQDDQLASAKDEMREVMEENQRLRMHLDRMMKEYRNLQNQFHDIVQK. A compositionally biased stretch (low complexity) spans 138-147; that stretch reads SSSTTVNTST. Residues 273–339 constitute a DNA-binding region (WRKY); sequence CDAPTMNDGC…YEGTHNHTLP (67 aa). Disordered regions lie at residues 356–381 and 427–454; these read LLSGSSNSSDPNPQVTATTTTTPTTT and TSTSSSSPSSLSHLNRMTQNFPPRYNYN. 2 stretches are compositionally biased toward low complexity: residues 371 to 381 and 427 to 438; these read TATTTTTPTTT and TSTSSSSPSSLS.

The protein belongs to the WRKY group II-b family.

The protein localises to the nucleus. In association with WRKY72A, contributes to basal defense against root-knot nematodes (RKNs) and potato aphids, as well as Mi-1-mediated gene-for-gene resistance to these pests. Both WRKY72A and WRKY72B are not required for gene-for-gene resistance mediated by Pto, another tomato R gene. This is WRKY transcription factor 72B from Solanum lycopersicum (Tomato).